The primary structure comprises 1038 residues: Bone morphogenetic protein receptor type-2 (1038 aa).

Positions 1 to 26 (MTSSLHRPFRVPWLLWAVLLVSTTAA) are cleaved as a signal peptide. The Extracellular segment spans residues 27–150 (SQNQERLCAF…PPHSFNRDET (124 aa)). Disulfide bonds link Cys34–Cys66, Cys60–Cys84, Cys94–Cys117, Cys99–Cys116, and Cys118–Cys123. Asn55 carries N-linked (GlcNAc...) asparagine glycosylation. Asn110 is a glycosylation site (N-linked (GlcNAc...) asparagine). A glycan (N-linked (GlcNAc...) asparagine) is linked at Asn126. The helical transmembrane segment at 151-171 (IIIALASVSVLAVLIVALCFG) threads the bilayer. Residues 172–1038 (YRMLTGDRKQ…VSKDIGMNCL (867 aa)) lie on the Cytoplasmic side of the membrane. Positions 203 to 504 (LKLLELIGRG…QCAEERMAEL (302 aa)) constitute a Protein kinase domain. Residues 209 to 217 (IGRGRYGAV), Lys230, and 280 to 282 (EYY) each bind ATP. Asp333 (proton acceptor) is an active-site residue. ATP-binding positions include 337 to 338 (RN) and Asp351. A Phosphothreonine modification is found at Thr379. Ser586 bears the Phosphoserine mark. Residues 593–626 (QAQARIPSPETSVTSLSTNTTTTNTTGLTPSTGM) are disordered. A compositionally biased stretch (low complexity) spans 603–626 (TSVTSLSTNTTTTNTTGLTPSTGM). Phosphoserine occurs at positions 680 and 681. The interval 746-769 (PKQQNLPKRPTSLPLNTKNSTKEP) is disordered. A Phosphoserine modification is found at Ser843. The segment covering 872 to 896 (RREQQAGHDEGVLDRLVDRRERPLE) has biased composition (basic and acidic residues). The segment at 872 to 974 (RREQQAGHDE…SGSGEKIKRR (103 aa)) is disordered. Composition is skewed to polar residues over residues 909 to 924 (PCSE…TSTA) and 937 to 964 (RPNS…QDGK).

The protein belongs to the protein kinase superfamily. TKL Ser/Thr protein kinase family. TGFB receptor subfamily. In terms of assembly, interacts with GDF5. Interacts with BMP4. Interacts with SCUBE3. Interacts with TSC22D1/TSC-22. Interacts with activin A/INHBA. The cofactor is Mg(2+). Mn(2+) is required as a cofactor.

It is found in the cell membrane. The enzyme catalyses L-threonyl-[receptor-protein] + ATP = O-phospho-L-threonyl-[receptor-protein] + ADP + H(+). The catalysed reaction is L-seryl-[receptor-protein] + ATP = O-phospho-L-seryl-[receptor-protein] + ADP + H(+). Its function is as follows. On ligand binding, forms a receptor complex consisting of two type II and two type I transmembrane serine/threonine kinases. Type II receptors phosphorylate and activate type I receptors which autophosphorylate, then bind and activate SMAD transcriptional regulators. Can also mediate signaling through the activation of the p38MAPK cascade. Binds to BMP7, BMP2 and, less efficiently, BMP4. Binding is weak but enhanced by the presence of type I receptors for BMPs. Mediates induction of adipogenesis by GDF6. Promotes signaling also by binding to activin A/INHBA. The chain is Bone morphogenetic protein receptor type-2 (Bmpr2) from Mus musculus (Mouse).